A 245-amino-acid chain; its full sequence is Carboxy-S-adenosyl-L-methionine synthase (245 aa).

S-adenosyl-L-methionine is bound by residues Y42, 67 to 69 (GCS), 92 to 93 (DN), 120 to 121 (DI), N135, and R202.

It belongs to the class I-like SAM-binding methyltransferase superfamily. Cx-SAM synthase family. As to quaternary structure, homodimer.

It carries out the reaction prephenate + S-adenosyl-L-methionine = carboxy-S-adenosyl-L-methionine + 3-phenylpyruvate + H2O. Catalyzes the conversion of S-adenosyl-L-methionine (SAM) to carboxy-S-adenosyl-L-methionine (Cx-SAM). The protein is Carboxy-S-adenosyl-L-methionine synthase of Vibrio campbellii (strain ATCC BAA-1116).